The following is a 1009-amino-acid chain: Type VII secretion system accessory factor EsaA (1009 aa).

Residues 7–27 traverse the membrane as a helical segment; that stretch reads IYALIVTLIIIIAIVSMIFFV. The span at 680 to 697 shows a compositional bias: basic and acidic residues; sequence TFAEEPQEPKIDKGKNDE. The interval 680-707 is disordered; sequence TFAEEPQEPKIDKGKNDEFNTMSSNLDK. The next 5 membrane-spanning stretches (helical) occupy residues 822-842, 869-889, 903-923, 928-948, and 979-999; these read ISPT…AYIF, VITS…VGLI, KFIL…TYLL, SIGM…MNNL, and IGLV…LNMF.

The protein belongs to the EsaA family. Homodimer. Interacts with EssB.

It localises to the cell membrane. Component of the type VII secretion system (Ess). Provides together with EssB and other components such as EssC and EssE a secretion plateform accross the cytoplasmic membrane in the host. The protein is Type VII secretion system accessory factor EsaA of Staphylococcus aureus (strain USA300).